The following is a 358-amino-acid chain: Alanine racemase (358 aa).

K35 (proton acceptor; specific for D-alanine) is an active-site residue. N6-(pyridoxal phosphate)lysine is present on K35. Substrate is bound at residue R130. The active-site Proton acceptor; specific for L-alanine is Y255. Residue M303 participates in substrate binding.

Belongs to the alanine racemase family. It depends on pyridoxal 5'-phosphate as a cofactor.

It carries out the reaction L-alanine = D-alanine. It participates in amino-acid biosynthesis; D-alanine biosynthesis; D-alanine from L-alanine: step 1/1. Its function is as follows. Catalyzes the interconversion of L-alanine and D-alanine. May also act on other amino acids. This is Alanine racemase (alr) from Shewanella sediminis (strain HAW-EB3).